Reading from the N-terminus, the 447-residue chain is MDEEYDVIVLGTGLTECILSGIMSVNGKKVLHMDRNPYYGGESSSITPLEELYKRFQLLEGPPESMGRGRDWNVDLIPKFLMANGQLVKMLLYTEVTRYLDFKVVEGSFVYKGGKIYKVPSTETEALASNLMGMFEKRRFRKFLVFVANFDENDPKTFEGVDPQTTSMRDVYRKFDLGQDVIDFTGHALALYRTDDYLDQPCLETVNRIKLYSESLARYGKSPYLYPLYGLGELPQGFARLSAIYGGTYMLNKPVDDIIMENGKVVGVKSEGEVARCKQLICDPSYIPDRVRKAGQVIRIICILSHPIKNTNDANSCQIIIPQNQVNRKSDIYVCMISYAHNVAAQGKYIAIASTTVETTDPEKEVEPALELLEPIDQKFVAISDLYEPIDDGCESQVFCSCSYDATTHFETTCNDIKDIYKRMAGTAFDFENMKRKQNDVFGEAEQ.

Belongs to the Rab GDI family. Interacts with RHOH. Interacts with the non-phosphorylated forms of RAB1A, RAB3A, RAB5A, RAB5B, RAB5C, RAB8A, RAB8B, RAB10, RAB12, RAB35, and RAB43. In terms of tissue distribution, brain; predominant in neural and sensory tissues.

The protein localises to the cytoplasm. It localises to the golgi apparatus. The protein resides in the trans-Golgi network. In terms of biological role, regulates the GDP/GTP exchange reaction of most Rab proteins by inhibiting the dissociation of GDP from them, and the subsequent binding of GTP to them. Promotes the dissociation of GDP-bound Rab proteins from the membrane and inhibits their activation. Promotes the dissociation of RAB1A, RAB3A, RAB5A and RAB10 from membranes. The polypeptide is Rab GDP dissociation inhibitor alpha (GDI1) (Homo sapiens (Human)).